Consider the following 136-residue polypeptide: Large ribosomal subunit protein uL16 (136 aa).

This sequence belongs to the universal ribosomal protein uL16 family. In terms of assembly, part of the 50S ribosomal subunit.

Its function is as follows. Binds 23S rRNA and is also seen to make contacts with the A and possibly P site tRNAs. The sequence is that of Large ribosomal subunit protein uL16 from Shewanella baltica (strain OS155 / ATCC BAA-1091).